A 103-amino-acid polypeptide reads, in one-letter code: Cysteine-rich and transmembrane domain-containing protein 1 (103 aa).

The segment covering 1–45 (MNQGNPPPYPGPGPTAPYPPYPSQPMGPGFYPPGPPGGPYPPPQG) has biased composition (pro residues). Residues 1-66 (MNQGNPPPYP…WQGGPQEPPK (66 aa)) are disordered. Residues 46–56 (GYPYQGYPQYG) are compositionally biased toward low complexity. Residues 80–97 (LGTSTCLTACWTALCCCC) form a helical membrane-spanning segment.

It belongs to the CYSTM1 family.

It localises to the membrane. In Bos taurus (Bovine), this protein is Cysteine-rich and transmembrane domain-containing protein 1 (CYSTM1).